Here is a 613-residue protein sequence, read N- to C-terminus: Pentatricopeptide repeat-containing protein At2g45350, chloroplastic (613 aa).

PPR repeat units lie at residues 85–119, 120–154, 155–185, 186–216, 219–250, 251–285, 286–312, 313–347, 349–383, 384–414, 415–449, 450–480, and 486–516; these read DPFL…GVSV, DKFS…GLWS, DLFL…MPKR, DSVS…MPME, NLIS…MPEK, DLIS…DVVT, WATM…MPHR, DVVA…SHLL, DDTT…QFYL, GGKL…IENK, SIDH…SLKP, DDIT…MRRK, and RLQH…MPVE. The segment at 521–596 is type E motif; sequence IWRTFLTACS…IPGCSWIELD (76 aa).

It belongs to the PPR family. PCMP-E subfamily. In terms of assembly, interacts with DYW1.

It is found in the plastid. The protein localises to the chloroplast. In terms of biological role, plays a major role in chloroplast RNA editing. Acts as a site-recognition transacting factor to recruit C-deaminase. Involved in single RNA editing events. Required for the edition of the site 1 of ndhD (ndhD-1 site corresponding to cytidine-2), which is a plastid-encoded subunit of the NADH-plastoquinone oxidoreductase. The interaction with DYW1 is required for its function in editing the ndhD-1 site. The chain is Pentatricopeptide repeat-containing protein At2g45350, chloroplastic (CRR4) from Arabidopsis thaliana (Mouse-ear cress).